Reading from the N-terminus, the 262-residue chain is MPGSSSRSSLAHLRNRLSECSDLQSLYEVAVLLAISRRLRSSLVSRSLSCVSKQKLIAELTGKDPDAFICMAVSLRWSEPIDLLYAFEEMFIRASCTRRFADCRDFLDELFWVSSIVDSHKILDKTLSARFLPAYSKKQLISGVFAGAHEGTLAVLEYFACYMQKKRAFRECVFFAEKIVADELGAQIADVTTERPLSREQRDELVDVLSRRFKRRIILREVINEKVFGGVRVQVNHSVIDDTVAVHLNNLALSFGALETFS.

The protein belongs to the ATPase delta chain family. As to quaternary structure, F-type ATPases have 2 components, F(1) - the catalytic core - and F(0) - the membrane proton channel. F(1) has five subunits: alpha(3), beta(3), gamma(1), delta(1), epsilon(1). F(0) has three main subunits: a(1), b(2) and c(10-14). The alpha and beta chains form an alternating ring which encloses part of the gamma chain. F(1) is attached to F(0) by a central stalk formed by the gamma and epsilon chains, while a peripheral stalk is formed by the delta and b chains.

The protein localises to the cell membrane. In terms of biological role, f(1)F(0) ATP synthase produces ATP from ADP in the presence of a proton or sodium gradient. F-type ATPases consist of two structural domains, F(1) containing the extramembraneous catalytic core and F(0) containing the membrane proton channel, linked together by a central stalk and a peripheral stalk. During catalysis, ATP synthesis in the catalytic domain of F(1) is coupled via a rotary mechanism of the central stalk subunits to proton translocation. Its function is as follows. This protein is part of the stalk that links CF(0) to CF(1). It either transmits conformational changes from CF(0) to CF(1) or is implicated in proton conduction. The sequence is that of ATP synthase subunit delta from Tropheryma whipplei (strain TW08/27) (Whipple's bacillus).